Consider the following 36-residue polypeptide: Zinc metalloproteinase-disintegrin-like VaH1 (36 aa).

The Peptidase M12B domain maps to 1–36 (MVTKYSSIFMSPILSNPPILYFSDCSREXYQKXLTN).

This sequence belongs to the venom metalloproteinase (M12B) family. P-III subfamily. P-IIIa sub-subfamily. As to quaternary structure, monomer. Requires Zn(2+) as cofactor. In terms of processing, the N-terminus is blocked. Post-translationally, glycosylated. As to expression, expressed by the venom gland.

It localises to the secreted. Inhibited by EDTA, but not inhibited by iodoacetamide, PMSF and pepstatin A. Its function is as follows. Snake venom zinc metalloprotease that exhibits strong hemorrhagic activity. It also degrades alpha-chain of fibrinogen (FGA), but not the beta- and the gamma-chains. Possesses potent azocaseinolytic activity and cleaves insulin B-chain, hydrolyzing it at positions Ala(14)-Leu(15), followed by Tyr(16)-Leu(17) and His(10)-Leu(11). In vivo, subcutaneous injection into mice induces strong hemorrhage. In Vipera ammodytes ammodytes (Western sand viper), this protein is Zinc metalloproteinase-disintegrin-like VaH1.